Consider the following 361-residue polypeptide: MAGNSIGQFFRVTTFGESHGIALGCIIDGVPPGIPITEADIQLDLDRRRPGTSRYTTQRRELDQVRILSGVFEGVTTGTSIGLMIENTDQRSQDYSAIKDVFRPGHADYTYEQKYGVRDYRGGGRSSARETAMRVAAGAIAKKYLAQKFGVQVRGYLAQMGDVSCDLLDWDLVEQNPFFCPDASKLEPLDALMRELKKAGDSIGAKITVVAENVPVGLGEPVFDRLDADLAHALMSINAVKGVEIGDGFAVVTKRGSENRDEITPQGFQSNHAGGILGGISSGQPVVAHIALKPTSSIMVPGQTINRQGEAVEIVTRGRHDPCVGIRAVPIAEAMMAIVLMDHLLRQRAQCGDVASDVPRW.

NADP(+) is bound by residues arginine 48 and arginine 54. FMN contacts are provided by residues 125–127 (RSS), 238–239 (NA), glycine 278, 293–297 (KPTSS), and arginine 319.

It belongs to the chorismate synthase family. As to quaternary structure, homotetramer. FMNH2 is required as a cofactor.

It carries out the reaction 5-O-(1-carboxyvinyl)-3-phosphoshikimate = chorismate + phosphate. It functions in the pathway metabolic intermediate biosynthesis; chorismate biosynthesis; chorismate from D-erythrose 4-phosphate and phosphoenolpyruvate: step 7/7. Functionally, catalyzes the anti-1,4-elimination of the C-3 phosphate and the C-6 proR hydrogen from 5-enolpyruvylshikimate-3-phosphate (EPSP) to yield chorismate, which is the branch point compound that serves as the starting substrate for the three terminal pathways of aromatic amino acid biosynthesis. This reaction introduces a second double bond into the aromatic ring system. The protein is Chorismate synthase of Yersinia pseudotuberculosis serotype IB (strain PB1/+).